We begin with the raw amino-acid sequence, 147 residues long: Basic phospholipase A2 beta-bungarotoxin A1 chain (147 aa).

The N-terminal stretch at 1-19 (MNPAHLLVLSAVCVSLLGA) is a signal peptide. Residues 20-27 (ANIPPHPL) constitute a propeptide that is removed on maturation. 6 disulfides stabilise this stretch: C54-C146, C56-C72, C71-C127, C78-C120, C88-C113, and C106-C118. Ca(2+) contacts are provided by Y55, G57, and G59. H75 is an active-site residue. Position 76 (D76) interacts with Ca(2+). The active site involves D121.

The protein belongs to the phospholipase A2 family. Group I subfamily. D49 sub-subfamily. Heterodimer; disulfide-linked. The A chains have phospholipase A2 activity and the B chains show homology with the basic protease inhibitors. The A1 chain is found in beta-1 and beta-2 bungarotoxins. It depends on Ca(2+) as a cofactor. As to expression, expressed by the venom gland.

It localises to the secreted. The enzyme catalyses a 1,2-diacyl-sn-glycero-3-phosphocholine + H2O = a 1-acyl-sn-glycero-3-phosphocholine + a fatty acid + H(+). Its function is as follows. Snake venom phospholipase A2 (PLA2) that inhibits neuromuscular transmission by blocking acetylcholine release from the nerve termini. PLA2 catalyzes the calcium-dependent hydrolysis of the 2-acyl groups in 3-sn-phosphoglycerides. The sequence is that of Basic phospholipase A2 beta-bungarotoxin A1 chain from Bungarus multicinctus (Many-banded krait).